A 75-amino-acid chain; its full sequence is UPF0352 protein PMI0824 (75 aa).

This sequence belongs to the UPF0352 family.

In Proteus mirabilis (strain HI4320), this protein is UPF0352 protein PMI0824.